The following is a 434-amino-acid chain: Probable carboxypeptidase BDBG_01803 (434 aa).

The signal sequence occupies residues 1 to 20; the sequence is MKLSHLAAALSAQLVAPVAA. 3 N-linked (GlcNAc...) asparagine glycosylation sites follow: asparagine 35, asparagine 136, and asparagine 150. Aspartate 160 serves as a coordination point for Zn(2+). Catalysis depends on glutamate 192, which acts as the Proton acceptor. Residue glutamate 193 participates in Zn(2+) binding. Asparagine 343 is a glycosylation site (N-linked (GlcNAc...) asparagine).

This sequence belongs to the peptidase M20A family. Zn(2+) serves as cofactor.

It is found in the secreted. The sequence is that of Probable carboxypeptidase BDBG_01803 from Blastomyces gilchristii (strain SLH14081) (Blastomyces dermatitidis).